The sequence spans 350 residues: Dihydroorotate dehydrogenase (quinone) (350 aa).

FMN contacts are provided by residues 67 to 71 and Gly-91; that span reads AGFDK. Lys-71 contacts substrate. A substrate-binding site is contributed by 116–120; it reads NRMGF. The FMN site is built by Asn-144 and Asn-177. Asn-177 is a binding site for substrate. Ser-180 functions as the Nucleophile in the catalytic mechanism. Asn-182 is a binding site for substrate. The FMN site is built by Lys-213 and Thr-241. Residue 242-243 participates in substrate binding; the sequence is NT. A disordered region spans residues 249 to 268; that stretch reads ASLHSDAADEEGGLSGAPIT. FMN contacts are provided by residues Gly-264, Gly-291, and 312-313; that span reads YT.

This sequence belongs to the dihydroorotate dehydrogenase family. Type 2 subfamily. As to quaternary structure, monomer. It depends on FMN as a cofactor.

It is found in the cell membrane. The enzyme catalyses (S)-dihydroorotate + a quinone = orotate + a quinol. Its pathway is pyrimidine metabolism; UMP biosynthesis via de novo pathway; orotate from (S)-dihydroorotate (quinone route): step 1/1. In terms of biological role, catalyzes the conversion of dihydroorotate to orotate with quinone as electron acceptor. In Natronomonas pharaonis (strain ATCC 35678 / DSM 2160 / CIP 103997 / JCM 8858 / NBRC 14720 / NCIMB 2260 / Gabara) (Halobacterium pharaonis), this protein is Dihydroorotate dehydrogenase (quinone).